Here is a 92-residue protein sequence, read N- to C-terminus: Large ribosomal subunit protein eL31 (92 aa).

It belongs to the eukaryotic ribosomal protein eL31 family.

The chain is Large ribosomal subunit protein eL31 from Desulfurococcus amylolyticus (strain DSM 18924 / JCM 16383 / VKM B-2413 / 1221n) (Desulfurococcus kamchatkensis).